The sequence spans 379 residues: Cobalt-precorrin-5B C(1)-methyltransferase (379 aa).

It belongs to the CbiD family.

It carries out the reaction Co-precorrin-5B + S-adenosyl-L-methionine = Co-precorrin-6A + S-adenosyl-L-homocysteine. It participates in cofactor biosynthesis; adenosylcobalamin biosynthesis; cob(II)yrinate a,c-diamide from sirohydrochlorin (anaerobic route): step 6/10. Functionally, catalyzes the methylation of C-1 in cobalt-precorrin-5B to form cobalt-precorrin-6A. In Salmonella choleraesuis (strain SC-B67), this protein is Cobalt-precorrin-5B C(1)-methyltransferase.